Consider the following 348-residue polypeptide: Photosystem II protein D1 (348 aa).

The next 3 helical transmembrane spans lie at 33 to 50, 122 to 137, and 146 to 160; these read YIGW…LATV, HFIF…EWEF, and WIFV…ASCA. Histidine 122 is a binding site for chlorophyll a. Position 130 (tryptophan 130) interacts with pheophytin a. [CaMn4O5] cluster is bound by residues aspartate 174 and glutamate 193. A helical membrane pass occupies residues 201–222; the sequence is FHILGVAGVFGGSLFSAMHGSL. Histidine 202 is a binding site for chlorophyll a. A quinone contacts are provided by residues histidine 219 and 268–269; that span reads SF. Histidine 219 contributes to the Fe cation binding site. Residue histidine 276 participates in Fe cation binding. The helical transmembrane segment at 278–292 threads the bilayer; the sequence is FLAAWPVIGIWFTAL. Residues histidine 336, glutamate 337, aspartate 346, and alanine 348 each coordinate [CaMn4O5] cluster.

Belongs to the reaction center PufL/M/PsbA/D family. In terms of assembly, PSII is composed of 1 copy each of membrane proteins PsbA, PsbB, PsbC, PsbD, PsbE, PsbF, PsbH, PsbI, PsbJ, PsbK, PsbL, PsbM, PsbT, PsbX, PsbY, PsbZ, Psb30/Ycf12, at least 3 peripheral proteins of the oxygen-evolving complex and a large number of cofactors. It forms dimeric complexes. The cofactor is The D1/D2 heterodimer binds P680, chlorophylls that are the primary electron donor of PSII, and subsequent electron acceptors. It shares a non-heme iron and each subunit binds pheophytin, quinone, additional chlorophylls, carotenoids and lipids. D1 provides most of the ligands for the Mn4-Ca-O5 cluster of the oxygen-evolving complex (OEC). There is also a Cl(-1) ion associated with D1 and D2, which is required for oxygen evolution. The PSII complex binds additional chlorophylls, carotenoids and specific lipids.. In terms of processing, tyr-165 forms a radical intermediate that is referred to as redox-active TyrZ, YZ or Y-Z.

It is found in the plastid. The protein resides in the chloroplast thylakoid membrane. The enzyme catalyses 2 a plastoquinone + 4 hnu + 2 H2O = 2 a plastoquinol + O2. Functionally, photosystem II (PSII) is a light-driven water:plastoquinone oxidoreductase that uses light energy to abstract electrons from H(2)O, generating O(2) and a proton gradient subsequently used for ATP formation. It consists of a core antenna complex that captures photons, and an electron transfer chain that converts photonic excitation into a charge separation. The D1/D2 (PsbA/PsbD) reaction center heterodimer binds P680, the primary electron donor of PSII as well as several subsequent electron acceptors. This Heterocapsa rotundata (Dinoflagellate) protein is Photosystem II protein D1.